The sequence spans 235 residues: Transmembrane emp24 domain-containing protein 9 (235 aa).

A signal peptide spans 1 to 37; it reads MAAVRGVRVVGTSPGLLLGRGMRAFLLLLCLAARGGA. The Lumenal segment spans residues 38–202; sequence LYFHIGETEK…RQTSESTNQR (165 aa). A GOLD domain is found at 47–145; it reads KKCFIEEIPD…MLRVHLDIQV (99 aa). The interval 121-160 is required for interaction with STX17; it reads CLHSNSTKFSLFAGGMLRVHLDIQVGEHANDYAEIAAKDK. A glycan (N-linked (GlcNAc...) asparagine) is linked at Asn-125. Residues 154 to 184 adopt a coiled-coil conformation; sequence EIAAKDKLSELQLRVRQLVEQVEQIQKEQNY. Lys-160 is modified (N6-acetyllysine). Residues 203–222 traverse the membrane as a helical segment; sequence VLWWSILQTLILVAIGVWQM. Over 223–235 the chain is Cytoplasmic; that stretch reads RHLKSFFEAKKLV. The COPII vesicle coat-binding signature appears at 228–229; sequence FF. A COPI vesicle coat-binding motif is present at residues 228-235; the sequence is FFEAKKLV.

The protein belongs to the EMP24/GP25L family. As to quaternary structure, monomer and homodimer in endoplasmic reticulum. Predominantly monomeric and to lesser extent homodimeric in endoplasmic reticulum-Golgi intermediate compartment and cis-Golgi network. Probably oligomerizes with other members of the EMP24/GP25L family such as TMED2, TMED7 and TMED10. Interacts with TMED5. Interacts (via C-terminus) with COPG1; the interaction involves dimeric TMED9. Interacts with PTPN2 and SPAST. Interacts with STX17; the interaction is direct. Post-translationally, N-linked glycosylated containing high mannose.

It is found in the endoplasmic reticulum membrane. Its subcellular location is the golgi apparatus. The protein resides in the cis-Golgi network membrane. It localises to the endoplasmic reticulum-Golgi intermediate compartment membrane. The protein localises to the trans-Golgi network membrane. In terms of biological role, appears to be involved in vesicular protein trafficking, mainly in the early secretory pathway. In COPI vesicle-mediated retrograde transport involved in the coatomer recruitment to membranes of the early secretory pathway. Increases coatomer-dependent activity of ARFGAP2. Thought to play a crucial role in the specific retention of p24 complexes in cis-Golgi membranes; specifically contributes to the coupled localization of TMED2 and TMED10 in the cis-Golgi network. May be involved in organization of intracellular membranes, such as of the ER-Golgi intermediate compartment and the Golgi apparatus. Involved in ER localization of PTPN2. The protein is Transmembrane emp24 domain-containing protein 9 (Tmed9) of Rattus norvegicus (Rat).